The primary structure comprises 211 residues: Superoxide dismutase [Fe] (211 aa).

4 residues coordinate Fe cation: His34, His85, Asp171, and His175.

This sequence belongs to the iron/manganese superoxide dismutase family. Homotetramer at high temperature; homodimer at room temperature. Requires Fe cation as cofactor.

It localises to the cytoplasm. The enzyme catalyses 2 superoxide + 2 H(+) = H2O2 + O2. Its function is as follows. Destroys superoxide anion radicals which are normally produced within the cells and which are toxic to biological systems. This is Superoxide dismutase [Fe] (sod) from Sulfolobus acidocaldarius (strain ATCC 33909 / DSM 639 / JCM 8929 / NBRC 15157 / NCIMB 11770).